Reading from the N-terminus, the 212-residue chain is tRNA (guanine-N(7)-)-methyltransferase (212 aa).

4 residues coordinate S-adenosyl-L-methionine: Glu-44, Asp-69, Asp-96, and Asp-118. Asp-118 is a catalytic residue. Residue Lys-122 coordinates substrate. The tract at residues 124 to 129 (RHEKRR) is interaction with RNA. Substrate is bound by residues Asp-154 and 191–194 (TEYE).

This sequence belongs to the class I-like SAM-binding methyltransferase superfamily. TrmB family.

The catalysed reaction is guanosine(46) in tRNA + S-adenosyl-L-methionine = N(7)-methylguanosine(46) in tRNA + S-adenosyl-L-homocysteine. The protein operates within tRNA modification; N(7)-methylguanine-tRNA biosynthesis. Catalyzes the formation of N(7)-methylguanine at position 46 (m7G46) in tRNA. This is tRNA (guanine-N(7)-)-methyltransferase from Streptococcus gordonii (strain Challis / ATCC 35105 / BCRC 15272 / CH1 / DL1 / V288).